We begin with the raw amino-acid sequence, 321 residues long: MGDLPLNINIQEPRWDQSTFLGRARHFFTVTDPRNLLLSGKQLEASRNIVQNYRAGVVTPGLTEDQLWRAKYVYDSAFHPDTGEKVVLIGRMSAQVPMNMTITGCMLTFYRKTPTMVFWQWVNQSFNAIVNYSNRSGDAPITVQQLGTAYVSATTGAVATALGLKSLTKHLPPLVGRFVPFAAVAAANCINIPLMRQRELQVGIPVTDEAGQRLGHSVTAAKQGIFQVVVSRIGMAIPAMAIPPVIMNTLEKKDFLKRRPWLGAPLQVGLVGFCLVFATPLCCALFPQRSSIHVTRLEPELRAQIQAQKPSIDVVYYNKGL.

Position 1 is an N-acetylmethionine (Met1). The next 4 membrane-spanning stretches (helical) occupy residues 146–164 (LGTA…ALGL), 174–194 (LVGR…NIPL), 225–245 (IFQV…IPPV), and 266–286 (LQVG…CALF).

The protein belongs to the sideroflexin family.

The protein localises to the mitochondrion membrane. It carries out the reaction L-serine(in) = L-serine(out). Functionally, mitochondrial serine transporter that mediates transport of serine into mitochondria, an important step of the one-carbon metabolism pathway. Mitochondrial serine is converted to glycine and formate, which then exits to the cytosol where it is used to generate the charged folates that serve as one-carbon donors. In Rattus norvegicus (Rat), this protein is Sideroflexin-3 (Sfxn3).